A 471-amino-acid polypeptide reads, in one-letter code: Sulfate adenylyltransferase subunit 1 (471 aa).

The region spanning 22–237 (KELLRFLTCG…LESVQITGAK (216 aa)) is the tr-type G domain. Residues 31 to 38 (GSVDDGKS) form a G1 region. Residue 31–38 (GSVDDGKS) coordinates GTP. A G2 region spans residues 89-93 (GITID). The interval 110–113 (DTPG) is G3. Residues 110–114 (DTPGH) and 165–168 (NKMD) contribute to the GTP site. A G4 region spans residues 165–168 (NKMD). Residues 202–204 (SAL) are G5.

It belongs to the TRAFAC class translation factor GTPase superfamily. Classic translation factor GTPase family. CysN/NodQ subfamily. As to quaternary structure, heterodimer composed of CysD, the smaller subunit, and CysN.

The enzyme catalyses sulfate + ATP + H(+) = adenosine 5'-phosphosulfate + diphosphate. It participates in sulfur metabolism; hydrogen sulfide biosynthesis; sulfite from sulfate: step 1/3. With CysD forms the ATP sulfurylase (ATPS) that catalyzes the adenylation of sulfate producing adenosine 5'-phosphosulfate (APS) and diphosphate, the first enzymatic step in sulfur assimilation pathway. APS synthesis involves the formation of a high-energy phosphoric-sulfuric acid anhydride bond driven by GTP hydrolysis by CysN coupled to ATP hydrolysis by CysD. The polypeptide is Sulfate adenylyltransferase subunit 1 (Saccharophagus degradans (strain 2-40 / ATCC 43961 / DSM 17024)).